The primary structure comprises 118 residues: Large ribosomal subunit protein uL18 (118 aa).

Belongs to the universal ribosomal protein uL18 family. As to quaternary structure, part of the 50S ribosomal subunit; part of the 5S rRNA/L5/L18/L25 subcomplex. Contacts the 5S and 23S rRNAs.

This is one of the proteins that bind and probably mediate the attachment of the 5S RNA into the large ribosomal subunit, where it forms part of the central protuberance. In Myxococcus xanthus (strain DK1622), this protein is Large ribosomal subunit protein uL18.